The sequence spans 183 residues: A-type ATP synthase subunit E (183 aa).

The protein belongs to the V-ATPase E subunit family. Has multiple subunits with at least A(3), B(3), C, D, E, F, H, I and proteolipid K(x).

Its subcellular location is the cell membrane. Component of the A-type ATP synthase that produces ATP from ADP in the presence of a proton gradient across the membrane. The protein is A-type ATP synthase subunit E of Methanosarcina acetivorans (strain ATCC 35395 / DSM 2834 / JCM 12185 / C2A).